A 296-amino-acid chain; its full sequence is Nucleotide-binding protein SEQ_0857 (296 aa).

Position 13–20 (13–20 (GMSGAGKT)) interacts with ATP. Residue 63–66 (DMRS) participates in GTP binding.

It belongs to the RapZ-like family.

Displays ATPase and GTPase activities. The protein is Nucleotide-binding protein SEQ_0857 of Streptococcus equi subsp. equi (strain 4047).